A 505-amino-acid chain; its full sequence is Cytochrome P450 9b2 (505 aa).

Cys-449 contributes to the heme binding site.

The protein belongs to the cytochrome P450 family. Heme is required as a cofactor.

The protein resides in the endoplasmic reticulum membrane. Its subcellular location is the microsome membrane. Its function is as follows. May be involved in the metabolism of insect hormones and in the breakdown of synthetic insecticides. This chain is Cytochrome P450 9b2 (Cyp9b2), found in Drosophila melanogaster (Fruit fly).